We begin with the raw amino-acid sequence, 92 residues long: Small ribosomal subunit protein uS19c (92 aa).

It belongs to the universal ribosomal protein uS19 family.

The protein resides in the plastid. The protein localises to the chloroplast. In terms of biological role, protein S19 forms a complex with S13 that binds strongly to the 16S ribosomal RNA. The protein is Small ribosomal subunit protein uS19c of Acorus calamus (Sweet flag).